Reading from the N-terminus, the 302-residue chain is Probable E3 ubiquitin-protein ligase RZFP34 (302 aa).

The segment at 54–130 adopts a CHY-type zinc-finger fold; it reads EGIMQYGCAH…VRQVCISCGV (77 aa). Zn(2+) is bound by residues Cys-61, His-63, Cys-74, Cys-75, Cys-81, Cys-84, His-85, His-100, Cys-112, Cys-115, Cys-125, Cys-128, Cys-137, Cys-140, His-153, Cys-154, Cys-157, Cys-160, His-170, Cys-171, Cys-174, Cys-177, His-186, and Cys-188. The segment at 132–196 adopts a CTCHY-type zinc-finger fold; that stretch reads MGKYFCEVCK…ACVEGAMHHD (65 aa). An RING-type; atypical zinc finger spans residues 197–240; the sequence is CPICFEYLFESTNDVSVLPCGHTIHVKCLREMEEHCQFACPLCS.

It localises to the nucleus. The catalysed reaction is S-ubiquitinyl-[E2 ubiquitin-conjugating enzyme]-L-cysteine + [acceptor protein]-L-lysine = [E2 ubiquitin-conjugating enzyme]-L-cysteine + N(6)-ubiquitinyl-[acceptor protein]-L-lysine.. It participates in protein modification; protein ubiquitination. Its function is as follows. Possesses transactivation activity in yeast cells. Involved in the regulation of stomatal aperture. May modulate the expression of genes that control stomata opening during heat shock or drought stress. The sequence is that of Probable E3 ubiquitin-protein ligase RZFP34 from Oryza sativa subsp. japonica (Rice).